The primary structure comprises 423 residues: Glutamyl-tRNA reductase (423 aa).

Substrate is bound by residues Thr49–Arg52, Ser106, Glu111–Gln113, and Gln117. Catalysis depends on Cys50, which acts as the Nucleophile. Gly186–Ser191 contributes to the NADP(+) binding site.

It belongs to the glutamyl-tRNA reductase family. Homodimer.

It catalyses the reaction (S)-4-amino-5-oxopentanoate + tRNA(Glu) + NADP(+) = L-glutamyl-tRNA(Glu) + NADPH + H(+). It participates in porphyrin-containing compound metabolism; protoporphyrin-IX biosynthesis; 5-aminolevulinate from L-glutamyl-tRNA(Glu): step 1/2. Functionally, catalyzes the NADPH-dependent reduction of glutamyl-tRNA(Glu) to glutamate 1-semialdehyde (GSA). This chain is Glutamyl-tRNA reductase, found in Idiomarina loihiensis (strain ATCC BAA-735 / DSM 15497 / L2-TR).